Consider the following 396-residue polypeptide: Gap junction gamma-1 protein (396 aa).

Topologically, residues 1–22 are cytoplasmic; sequence MSWSFLTRLLEEIHNHSTFVGK. Residues 23–45 traverse the membrane as a helical segment; the sequence is IWLTVLIAFRIALTAVGGESIYY. Residues 46–75 lie on the Extracellular side of the membrane; it reads DEQSKFVCNTEQPGCENVCYDAFAPLSHVR. Residues 76 to 95 form a helical membrane-spanning segment; that stretch reads FWVFQIILVATPSVMYLGYA. At 96–175 the chain is on the cytoplasmic side; the sequence is IHKIAKMEHG…RRIREDGLMK (80 aa). Residues 145–165 are disordered; it reads ELESEKENKEQNQPKPKHDGR. Positions 147-156 are enriched in basic and acidic residues; sequence ESEKENKEQN. The helical transmembrane segment at 176-198 threads the bilayer; it reads IYVLQLLARTVFEVGFLIGQYFL. The Extracellular segment spans residues 199-228; sequence YGFQVHPFYVCSRLPCPHKIDCFISRPTEK. The chain crosses the membrane as a helical span at residues 229-248; sequence TIFLLIMYGVTGLCLLLNIW. At 249–396 the chain is on the cytoplasmic side; that stretch reads EMLHLGFGTI…SGDGKNSVWI (148 aa). The interval 355-396 is disordered; it reads AYSHQNNPHGPREKKAKVGSKAGSNKSSASSKSGDGKNSVWI. Positions 373–396 are enriched in low complexity; it reads GSKAGSNKSSASSKSGDGKNSVWI.

Belongs to the connexin family. Gamma-type subfamily. In terms of assembly, a connexon is composed of a hexamer of connexins. Interacts with CNST.

It localises to the cell membrane. Its subcellular location is the cell junction. The protein resides in the gap junction. One gap junction consists of a cluster of closely packed pairs of transmembrane channels, the connexons, through which materials of low MW diffuse from one cell to a neighboring cell. This is Gap junction gamma-1 protein (GJC1) from Canis lupus familiaris (Dog).